Consider the following 161-residue polypeptide: Endoribonuclease YbeY (161 aa).

Residues H121, H125, and H131 each contribute to the Zn(2+) site.

Belongs to the endoribonuclease YbeY family. Zn(2+) serves as cofactor.

It localises to the cytoplasm. Its function is as follows. Single strand-specific metallo-endoribonuclease involved in late-stage 70S ribosome quality control and in maturation of the 3' terminus of the 16S rRNA. The protein is Endoribonuclease YbeY of Xylella fastidiosa (strain M23).